We begin with the raw amino-acid sequence, 460 residues long: Ribosomal protein uS12 methylthiotransferase RimO (460 aa).

The 115-residue stretch at 16 to 130 (NKIHFISLGC…ILSAIESKEA (115 aa)) folds into the MTTase N-terminal domain. [4Fe-4S] cluster-binding residues include Cys-25, Cys-61, Cys-93, Cys-164, Cys-168, and Cys-171. Residues 150 to 382 (STPKHYAYLK…SQTQKKNVEK (233 aa)) enclose the Radical SAM core domain. The region spanning 385-455 (KQLVGQIVEA…GYDLVGRVIK (71 aa)) is the TRAM domain.

It belongs to the methylthiotransferase family. RimO subfamily. [4Fe-4S] cluster serves as cofactor.

The protein resides in the cytoplasm. The catalysed reaction is L-aspartate(89)-[ribosomal protein uS12]-hydrogen + (sulfur carrier)-SH + AH2 + 2 S-adenosyl-L-methionine = 3-methylsulfanyl-L-aspartate(89)-[ribosomal protein uS12]-hydrogen + (sulfur carrier)-H + 5'-deoxyadenosine + L-methionine + A + S-adenosyl-L-homocysteine + 2 H(+). In terms of biological role, catalyzes the methylthiolation of an aspartic acid residue of ribosomal protein uS12. This is Ribosomal protein uS12 methylthiotransferase RimO from Chlamydia caviae (strain ATCC VR-813 / DSM 19441 / 03DC25 / GPIC) (Chlamydophila caviae).